Reading from the N-terminus, the 946-residue chain is Increased sodium tolerance protein 2 (946 aa).

At 1-121 the chain is on the cytoplasmic side; the sequence is MSQTITSLDP…SNLTNNPKQS (121 aa). A helical transmembrane segment spans residues 122-142; that stretch reads LYFAFLQNYIKWLIPFSFFGL. Over 143–153 the chain is Extracellular; it reads SIRFLSNFTYE. The chain crosses the membrane as a helical span at residues 154 to 174; the sequence is FNSTYSLFAILWTLSFTAFWL. Residues 175–217 lie on the Cytoplasmic side of the membrane; that stretch reads YKYEPFWSDRLSKYSSFSTIEFLQDKQKAQKKASSVIMLKKCC. The helical transmembrane segment at 218–238 threads the bilayer; it reads FIPVALLFGAILLSFQLYCFA. Topologically, residues 239 to 253 are extracellular; sequence LEIFIKQIYNGPMIS. A helical transmembrane segment spans residues 254–274; that stretch reads ILSFLPTILICTFTPVLTVIY. Residues 275–302 lie on the Cytoplasmic side of the membrane; the sequence is NKYFVEPMTKWENHSSVVNAKKSKEAKN. The chain crosses the membrane as a helical span at residues 303 to 323; it reads FVIIFLSSYVPLLITLFLYLP. Residues 324-447 lie on the Extracellular side of the membrane; the sequence is MGHLLTAEIR…DANFKKLLLQ (124 aa). A helical membrane pass occupies residues 448 to 468; sequence FGYLVMFSTIWPLAPFICLIV. Topologically, residues 469-505 are cytoplasmic; it reads NLIVYQVDLRKAVLYSKPEYFPFPIYDKPSSVSNTQK. The helical transmembrane segment at 506 to 526 threads the bilayer; that stretch reads LTVGLWNSVLVMFSILGCVIT. Over 527–563 the chain is Extracellular; sequence ATLTYMYQSCNIPGVGAHTSIHTNKAWYLANPINHSW. Residues 564–584 form a helical membrane-spanning segment; sequence INIVLYAVFIEHVSVAIFFLF. Residues 585 to 946 are Cytoplasmic-facing; that stretch reads SSILKSSHDD…GLLHKLKKKL (362 aa). 2 disordered regions span residues 617-638 and 665-718; these read EKIPSPEFNSNNEKELVQRKGS and THAN…TEKR. Positions 628–638 are enriched in basic and acidic residues; it reads NEKELVQRKGS. Ser638 is modified (phosphoserine). A compositionally biased stretch (low complexity) spans 671 to 689; sequence PSSLSSASSPSLSSSSSSS. Position 701 is a phosphothreonine (Thr701). Phosphoserine occurs at positions 704 and 720. Thr726 is subject to Phosphothreonine. Position 729 is a phosphoserine (Ser729). Tyr730 carries the phosphotyrosine modification. Ser757 bears the Phosphoserine mark. The segment at 759–784 is disordered; it reads RDAKSSAESSNATNNNTLGTESKLLP. Low complexity predominate over residues 764–775; sequence SAESSNATNNNT. Phosphoserine occurs at positions 793, 844, and 847. A disordered region spans residues 846–946; sequence VSVATEQTKK…GLLHKLKKKL (101 aa). Thr850 is modified (phosphothreonine). The segment covering 859–868 has biased composition (polar residues); sequence STKNGPSRSI. The span at 884 to 893 shows a compositional bias: low complexity; it reads TTTTTTTDAT. A compositionally biased stretch (basic residues) spans 895-905; it reads PHHHHHHHRHR. Positions 916–927 are enriched in low complexity; the sequence is SKTTESSSSSSA. A compositionally biased stretch (basic residues) spans 931 to 946; that stretch reads KPKHKKGLLHKLKKKL.

In terms of assembly, interacts with BTN2.

The protein resides in the cell membrane. Its function is as follows. May be involved in ion homeostasis together with BTN1 or BTN2. The sequence is that of Increased sodium tolerance protein 2 (IST2) from Saccharomyces cerevisiae (strain ATCC 204508 / S288c) (Baker's yeast).